The chain runs to 284 residues: Tropomyosin, smooth muscle/fibroblast CTM1 (284 aa).

Residues M1–L284 adopt a coiled-coil conformation. Residues A18–G38 are disordered.

This sequence belongs to the tropomyosin family. In terms of assembly, homodimer. Predominantly expressed in body wall muscle and heart, low in intestine, ovary and larval tail muscle.

In terms of biological role, the function of tropomyosin in smooth muscle and non-muscle cells is not clear. This is Tropomyosin, smooth muscle/fibroblast CTM1 (CTM1) from Ciona intestinalis (Transparent sea squirt).